Here is a 59-residue protein sequence, read N- to C-terminus: Chromatin protein Cren7 (59 aa).

This sequence belongs to the Cren7 family. In terms of assembly, monomer. Methylated at multiple sites, to varying extents.

It localises to the chromosome. The protein localises to the cytoplasm. Its function is as follows. A chromatin protein, binds double-stranded DNA without sequence specificity. Constrains negative DNA supercoils. This Pyrobaculum arsenaticum (strain DSM 13514 / JCM 11321 / PZ6) protein is Chromatin protein Cren7.